Consider the following 461-residue polypeptide: Transcription factor GTE3, chloroplastic (461 aa).

Residues 1-11 (MASGPIAGGGV) are compositionally biased toward gly residues. Residues 1-41 (MASGPIAGGGVSKTKHKWSDSGNKSQKRSKPTVANSNSLGL) form a disordered region. Residues 1–51 (MASGPIAGGGVSKTKHKWSDSGNKSQKRSKPTVANSNSLGLEDNHQMMKIS) constitute a chloroplast transit peptide. Positions 114 to 220 (KGTVQILKSC…NLFEEKWVPL (107 aa)) constitute a Bromo domain. Positions 298-379 (LVEEASANRD…EYKESLSKKK (82 aa)) constitute an NET domain. Basic and acidic residues predominate over residues 376 to 392 (SKKKEEQGLDSERDAES). The segment at 376-461 (SKKKEEQGLD…SSGHESDTGN (86 aa)) is disordered. The segment covering 393-412 (FHNSVHESNTLVTGLESSKV) has biased composition (polar residues). The segment covering 429–451 (GGSSSSNSSSSGSGSGSSGSDSD) has biased composition (low complexity). The segment covering 452–461 (SSGHESDTGN) has biased composition (basic and acidic residues).

In terms of assembly, interacts with SIZ1 (via PHD domain). Sumoylated by SIZ1. Sumoylation reduces capacity to bind to acetylated histone H3.

Its subcellular location is the plastid. It is found in the chloroplast. In terms of biological role, probable transcription factor that binds to acetylated histone H3. The sequence is that of Transcription factor GTE3, chloroplastic (GTE3) from Arabidopsis thaliana (Mouse-ear cress).